Consider the following 79-residue polypeptide: Cytochrome b (79 aa).

Transmembrane regions (helical) follow at residues 1 to 7 (TALLLAA), 31 to 52 (WLIR…YLHI), and 67 to 79 (WNIG…TLMA). Residues His37 and His51 each contribute to the heme b site.

It belongs to the cytochrome b family. In terms of assembly, the cytochrome bc1 complex contains 11 subunits: 3 respiratory subunits (MT-CYB, CYC1 and UQCRFS1), 2 core proteins (UQCRC1 and UQCRC2) and 6 low-molecular weight proteins (UQCRH/QCR6, UQCRB/QCR7, UQCRQ/QCR8, UQCR10/QCR9, UQCR11/QCR10 and a cleavage product of UQCRFS1). This cytochrome bc1 complex then forms a dimer. The cofactor is heme b.

Its subcellular location is the mitochondrion inner membrane. Component of the ubiquinol-cytochrome c reductase complex (complex III or cytochrome b-c1 complex) that is part of the mitochondrial respiratory chain. The b-c1 complex mediates electron transfer from ubiquinol to cytochrome c. Contributes to the generation of a proton gradient across the mitochondrial membrane that is then used for ATP synthesis. The chain is Cytochrome b (MT-CYB) from Pomatostomus superciliosus (White-browed babbler).